The chain runs to 170 residues: MSQLPLELGLSFNGGDILFQLLAMLILLALLKKYALGPLLNIMKQREDHIAGEITSAEEKNKEAQQLIEEQRVLLKEARQESQTLIENAKKLGEKQKEEIIQAARAESERLKEAARTEIVKEKEQAVSALREQVASLSVMIASKVIEKELDEQAQEKLIQDYLKEVGESR.

Residues 15-37 (GDILFQLLAMLILLALLKKYALG) form a helical membrane-spanning segment.

It belongs to the ATPase B chain family. In terms of assembly, F-type ATPases have 2 components, F(1) - the catalytic core - and F(0) - the membrane proton channel. F(1) has five subunits: alpha(3), beta(3), gamma(1), delta(1), epsilon(1). F(0) has three main subunits: a(1), b(2) and c(10-14). The alpha and beta chains form an alternating ring which encloses part of the gamma chain. F(1) is attached to F(0) by a central stalk formed by the gamma and epsilon chains, while a peripheral stalk is formed by the delta and b chains. The F(1)F(0) complex interacts with SpoIIIJ and YqjG; YqgA is found in the same complex.

It localises to the cell membrane. In terms of biological role, f(1)F(0) ATP synthase produces ATP from ADP in the presence of a proton or sodium gradient. F-type ATPases consist of two structural domains, F(1) containing the extramembraneous catalytic core and F(0) containing the membrane proton channel, linked together by a central stalk and a peripheral stalk. During catalysis, ATP synthesis in the catalytic domain of F(1) is coupled via a rotary mechanism of the central stalk subunits to proton translocation. Functionally, component of the F(0) channel, it forms part of the peripheral stalk, linking F(1) to F(0). This Bacillus subtilis (strain 168) protein is ATP synthase subunit b.